A 128-amino-acid polypeptide reads, in one-letter code: Adrenodoxin (128 aa).

Position 3 is a phosphoserine (Ser-3). Lys-6 carries the N6-acetyllysine; alternate modification. Lys-6 carries the post-translational modification N6-succinyllysine; alternate. The 2Fe-2S ferredoxin-type domain maps to 7–111 (VTVNFINRDG…NMTVRVPDAV (105 aa)). Residues Cys-46, Cys-52, Cys-55, and Cys-92 each contribute to the [2Fe-2S] cluster site. An N6-succinyllysine modification is found at Lys-98. A Phosphoserine modification is found at Ser-117.

Belongs to the adrenodoxin/putidaredoxin family. In terms of assembly, interacts with CYP11A1. It depends on [2Fe-2S] cluster as a cofactor.

It localises to the mitochondrion matrix. In terms of biological role, essential for the synthesis of various steroid hormones. Participates in the reduction of mitochondrial cytochrome P450 for steroidogenesis. Transfers electrons from adrenodoxin reductase to CYP11A1, a cytochrome P450 that catalyzes cholesterol side-chain cleavage. Does not form a ternary complex with adrenodoxin reductase and CYP11A1 but shuttles between the two enzymes to transfer electrons. The sequence is that of Adrenodoxin (FDX1) from Ovis aries (Sheep).